The sequence spans 136 residues: Large ribosomal subunit protein uL16 (136 aa).

It belongs to the universal ribosomal protein uL16 family. As to quaternary structure, part of the 50S ribosomal subunit.

Its function is as follows. Binds 23S rRNA and is also seen to make contacts with the A and possibly P site tRNAs. In Histophilus somni (strain 129Pt) (Haemophilus somnus), this protein is Large ribosomal subunit protein uL16.